The chain runs to 385 residues: Carbamoyl phosphate synthase small chain (385 aa).

The tract at residues 1-196 is CPSase; sequence MEDALGQLAV…KLEKKKKFLF (196 aa). L-glutamine contacts are provided by Ser-51, Gly-245, and Gly-247. In terms of domain architecture, Glutamine amidotransferase type-1 spans 197 to 384; it reads HIVVYDFGVK…IKLLNQVKFS (188 aa). The active-site Nucleophile is the Cys-273. L-glutamine contacts are provided by Leu-274, Gln-277, Asn-315, and Phe-318. Residues His-357 and Glu-359 contribute to the active site.

Belongs to the CarA family. As to quaternary structure, composed of two chains; the small (or glutamine) chain promotes the hydrolysis of glutamine to ammonia, which is used by the large (or ammonia) chain to synthesize carbamoyl phosphate. Tetramer of heterodimers (alpha,beta)4.

It catalyses the reaction hydrogencarbonate + L-glutamine + 2 ATP + H2O = carbamoyl phosphate + L-glutamate + 2 ADP + phosphate + 2 H(+). The enzyme catalyses L-glutamine + H2O = L-glutamate + NH4(+). It participates in amino-acid biosynthesis; L-arginine biosynthesis; carbamoyl phosphate from bicarbonate: step 1/1. The protein operates within pyrimidine metabolism; UMP biosynthesis via de novo pathway; (S)-dihydroorotate from bicarbonate: step 1/3. In terms of biological role, small subunit of the glutamine-dependent carbamoyl phosphate synthetase (CPSase). CPSase catalyzes the formation of carbamoyl phosphate from the ammonia moiety of glutamine, carbonate, and phosphate donated by ATP, constituting the first step of 2 biosynthetic pathways, one leading to arginine and/or urea and the other to pyrimidine nucleotides. The small subunit (glutamine amidotransferase) binds and cleaves glutamine to supply the large subunit with the substrate ammonia. This is Carbamoyl phosphate synthase small chain from Buchnera aphidicola subsp. Schizaphis graminum (strain Sg).